The sequence spans 158 residues: 6,7-dimethyl-8-ribityllumazine synthase (158 aa).

Residues Phe-22, 57–59, and 81–83 contribute to the 5-amino-6-(D-ribitylamino)uracil site; these read AVE and AVI. 86-87 lines the (2S)-2-hydroxy-3-oxobutyl phosphate pocket; it reads GT. Catalysis depends on His-89, which acts as the Proton donor. Phe-114 lines the 5-amino-6-(D-ribitylamino)uracil pocket. Position 128 (Arg-128) interacts with (2S)-2-hydroxy-3-oxobutyl phosphate.

The protein belongs to the DMRL synthase family. Forms an icosahedral capsid composed of 60 subunits, arranged as a dodecamer of pentamers.

It carries out the reaction (2S)-2-hydroxy-3-oxobutyl phosphate + 5-amino-6-(D-ribitylamino)uracil = 6,7-dimethyl-8-(1-D-ribityl)lumazine + phosphate + 2 H2O + H(+). It participates in cofactor biosynthesis; riboflavin biosynthesis; riboflavin from 2-hydroxy-3-oxobutyl phosphate and 5-amino-6-(D-ribitylamino)uracil: step 1/2. Catalyzes the formation of 6,7-dimethyl-8-ribityllumazine by condensation of 5-amino-6-(D-ribitylamino)uracil with 3,4-dihydroxy-2-butanone 4-phosphate. This is the penultimate step in the biosynthesis of riboflavin. This chain is 6,7-dimethyl-8-ribityllumazine synthase, found in Shewanella piezotolerans (strain WP3 / JCM 13877).